The sequence spans 380 residues: Cytochrome b (380 aa).

Helical transmembrane passes span 34–54 (FGSL…LLAM), 78–99 (WLIR…FLHI), 114–134 (WNTG…GYVL), and 179–199 (FFAL…IHLT). His-84 and His-98 together coordinate heme b. Heme b-binding residues include His-183 and His-197. His-202 is a binding site for a ubiquinone. 4 consecutive transmembrane segments (helical) span residues 227 to 247 (IKDI…ALFS), 289 to 309 (LGGV…PFLH), 321 to 341 (LSQT…WIGS), and 348 to 368 (FIII…ILFP).

It belongs to the cytochrome b family. In terms of assembly, the cytochrome bc1 complex contains 11 subunits: 3 respiratory subunits (MT-CYB, CYC1 and UQCRFS1), 2 core proteins (UQCRC1 and UQCRC2) and 6 low-molecular weight proteins (UQCRH/QCR6, UQCRB/QCR7, UQCRQ/QCR8, UQCR10/QCR9, UQCR11/QCR10 and a cleavage product of UQCRFS1). This cytochrome bc1 complex then forms a dimer. Requires heme b as cofactor.

Its subcellular location is the mitochondrion inner membrane. Functionally, component of the ubiquinol-cytochrome c reductase complex (complex III or cytochrome b-c1 complex) that is part of the mitochondrial respiratory chain. The b-c1 complex mediates electron transfer from ubiquinol to cytochrome c. Contributes to the generation of a proton gradient across the mitochondrial membrane that is then used for ATP synthesis. The sequence is that of Cytochrome b (MT-CYB) from Alectoris chukar (Chukar partridge).